Reading from the N-terminus, the 504-residue chain is Patatin-like phospholipase domain-containing protein 2 (504 aa).

The Cytoplasmic segment spans residues 1-8 (MFPREKTW). A helical transmembrane segment spans residues 9–29 (NISFAGCGFLGVYYVGVASCL). In terms of domain architecture, PNPLA spans 10 to 179 (ISFAGCGFLG…SDNLPLYELK (170 aa)). The short motif at 14-19 (GCGFLG) is the GXGXXG element. Residues 30–42 (REHAPFLVANATH) lie on the Extracellular side of the membrane. N-linked (GlcNAc...) asparagine glycosylation is present at N39. Residues 43-63 (IYGASAGALTATALVTGVCLG) form a helical membrane-spanning segment. Positions 45-49 (GASAG) match the GXSXG motif. The active-site Nucleophile is S47. Over 64 to 137 (EAGAKFIEVS…IISHFNSKDE (74 aa)) the chain is Cytoplasmic. A Glycyl lysine isopeptide (Lys-Gly) (interchain with G-Cter in ubiquitin) cross-link involves residue K92. A helical membrane pass occupies residues 138 to 158 (LIQANVCSGFIPVYCGLIPPS). The Extracellular segment spans residues 159 to 329 (LQGVRYVDGG…TTLSNMLPVR (171 aa)). Catalysis depends on D166, which acts as the Proton acceptor. The DGA/G signature appears at 166 to 168 (DGG). A helical membrane pass occupies residues 330–350 (LATAMMVPYTLPLESALSFTI). The Cytoplasmic portion of the chain corresponds to 351 to 504 (RLLEWLPDVP…ARPVIGALGL (154 aa)). S372 carries the post-translational modification Phosphoserine; in vitro. S404 is subject to Phosphoserine; by PKA and FAM20C. Phosphoserine is present on S428. Residues 463 to 492 (APADPAPAPADPASPQHQLAGPAPLLSTPA) form a disordered region.

Interacts with ABHD5; this association stimulates PNPLA2 triglyceride hydrolase activity. Interacts with SERPINF1; this interaction stimulates the phospholipase A2 activity of PNPLA2. Despite a colocalization in lipid droplets, it probably does not interact with PLIN. Interacts with PLIN5; prevents interaction with ABHD5. Interacts with FAF2. Phosphorylation at Ser-404 by PKA is increased during fasting and moderate intensity exercise, and moderately increases lipolytic activity. Phosphorylation at Ser-404 is increased upon beta-adrenergic stimulation. Post-translationally, ubiquitinated by PEX2 in response to reactive oxygen species (ROS), leading to its degradation. Ubiquitination is stimulated by LDAH. In terms of tissue distribution, highest expression in adipose tissue. Also detected in heart, skeletal muscle, and portions of the gastrointestinal tract. Detected in normal retina and retinoblastoma cells. Detected in retinal pigment epithelium and, at lower intensity, in the inner segments of photoreceptors and in the ganglion cell layer of the neural retina (at protein level).

It is found in the lipid droplet. Its subcellular location is the cell membrane. It localises to the cytoplasm. It catalyses the reaction a triacylglycerol + H2O = a diacylglycerol + a fatty acid + H(+). The enzyme catalyses a triacylglycerol + H2O = a 1,2-diacylglycerol + a fatty acid + H(+). The catalysed reaction is a triacylglycerol + H2O = a 1,3-diacylglycerol + a fatty acid + H(+). It carries out the reaction a triacyl-sn-glycerol + H2O = a 1,3-diacyl-sn-glycerol + a fatty acid + H(+). It catalyses the reaction a triacyl-sn-glycerol + H2O = a 2,3-diacyl-sn-glycerol + a fatty acid + H(+). The enzyme catalyses a 1-acylglycerol + a 1,3-diacylglycerol = a triacylglycerol + glycerol. The catalysed reaction is a 1-acylglycerol + a 1,2-diacylglycerol = a triacylglycerol + glycerol. It carries out the reaction 2 a 1-acylglycerol = a 1,2-diacylglycerol + glycerol. It catalyses the reaction a triacylglycerol + all-trans-retinol = an all-trans-retinyl ester + a diacylglycerol. The enzyme catalyses 1,2-di-(9Z-octadecenoyl)-glycerol + (9Z)-octadecenoate + H(+) = 1,2,3-tri-(9Z-octadecenoyl)-glycerol + H2O. The catalysed reaction is 1,2,3-tri-(9Z-octadecenoyl)-glycerol + H2O = 1,3-di-(9Z-octadecenoyl)-glycerol + (9Z)-octadecenoate + H(+). It carries out the reaction 1-(9Z-octadecenoyl)-glycerol + 1,3-di-(9Z-octadecenoyl)-glycerol = 1,2,3-tri-(9Z-octadecenoyl)-glycerol + glycerol. It catalyses the reaction 1-(9Z-octadecenoyl)-glycerol + 1,2-di-(9Z-octadecenoyl)-glycerol = 1,2,3-tri-(9Z-octadecenoyl)-glycerol + glycerol. The enzyme catalyses 2 1-(9Z-octadecenoyl)-glycerol = 1,2-di-(9Z-octadecenoyl)-glycerol + glycerol. The catalysed reaction is 1,2,3-tri-(9Z-octadecenoyl)-glycerol + all-trans-retinol = all-trans-retinyl 9Z-octadecenoate + di-(9Z)-octadecenoylglycerol. It carries out the reaction 1,2,3-tri-(9Z)-hexadecenoylglycerol + H2O = 1,3-di-(9Z)-hexadecenoylglycerol + (9Z)-hexadecenoate + H(+). It catalyses the reaction 1,2,3-tri-(9Z,12Z)-octadecadienoylglycerol + H2O = 1,3-di-(9Z,12Z)-octadecadienoylglycerol + (9Z,12Z)-octadecadienoate + H(+). The enzyme catalyses 1,2,3-tri-(9Z,12Z,15Z)-octadecatrienoylglycerol + H2O = 1,3-di-(9Z,12Z,15Z)-octadecatrienoylglycerol + (9Z,12Z,15Z)-octadecatrienoate + H(+). The catalysed reaction is 1,3-di-(9Z)-octadecenoyl-2-hexadecanoylglycerol + H2O = 1,3-di-(9Z-octadecenoyl)-glycerol + hexadecanoate + H(+). It carries out the reaction 1,2-di-(9Z)-octadecenoyl-3-hexadecanoyl-sn-glycerol + H2O = 1-(9Z)-octadecenoyl-3-hexadecanoyl-sn-glycerol + (9Z)-octadecenoate + H(+). It catalyses the reaction 1-hexadecanoyl-2,3-di-(9Z)-octadecenoyl-sn-glycerol + H2O = 1-hexadecanoyl-3-(9Z)-octadecenoyl-sn-glycerol + (9Z)-octadecenoate + H(+). The enzyme catalyses 1,2,3-tri-(9Z-octadecenoyl)-glycerol + H2O = 2,3-di-(9Z)-octadecenoyl-sn-glycerol + (9Z)-octadecenoate + H(+). The catalysed reaction is 1,2,3-tri-(9Z)-hexadecenoylglycerol + H2O = 2,3-di-(9Z)-hexadecenoyl-sn-glycerol + (9Z)-hexadecenoate + H(+). It carries out the reaction 1,2,3-tri-(9Z,12Z)-octadecadienoylglycerol + H2O = 2,3-di-(9Z,12Z)-octadecadienoyl-sn-glycerol + (9Z,12Z)-octadecadienoate + H(+). It catalyses the reaction 1,2,3-tri-(9Z,12Z,15Z)-octadecatrienoylglycerol + H2O = 2,3-di-(9Z,12Z,15Z)-octadecatrienoyl-sn-glycerol + (9Z,12Z,15Z)-octadecatrienoate + H(+). The enzyme catalyses 1,3-di-(9Z)-octadecenoyl-2-hexadecanoylglycerol + H2O = 2-hexadecanoyl-3-(9Z)-octadecenoyl-sn-glycerol + (9Z)-octadecenoate + H(+). The catalysed reaction is 1-hexadecanoyl-2,3-di-(9Z)-octadecenoyl-sn-glycerol + H2O = 2,3-di-(9Z)-octadecenoyl-sn-glycerol + hexadecanoate + H(+). It carries out the reaction 1,2-di-(9Z)-octadecenoyl-3-hexadecanoyl-sn-glycerol + H2O = 2-(9Z-octadecenoyl)-3-hexadecanoyl-sn-glycerol + (9Z)-octadecenoate + H(+). It catalyses the reaction a 1,2-diacyl-sn-glycero-3-phosphocholine + H2O = a 1-acyl-sn-glycero-3-phosphocholine + a fatty acid + H(+). The enzyme catalyses 1,2,3-tri-(9Z-octadecenoyl)-glycerol + 9-hydroxy-octadecanoate = 9-(9Z-octadecenoyloxy)-octadecanoate + 2,3-di-(9Z)-octadecenoyl-sn-glycerol. The catalysed reaction is 1-hexadecanoyl-2,3-di-(9Z)-octadecenoyl-sn-glycerol + 9-hydroxy-octadecanoate = 9-hexadecanoyloxy-octadecanoate + 2,3-di-(9Z)-octadecenoyl-sn-glycerol. It carries out the reaction 1,2,3-tri-(10Z)-heptadecenoylglycerol + 9-hydroxy-octadecanoate = 2,3-di-(10Z-heptadecenoyl)-sn-glycerol + 9-(10Z-heptadecenoyloxy)-octadecanoate. It catalyses the reaction 1,2,3-tri-(9Z,12Z)-octadecadienoylglycerol + 9-hydroxy-octadecanoate = 2,3-di-(9Z,12Z)-octadecadienoyl-sn-glycerol + 9-(9Z,12Z-octadecadienoyloxy)-octadecanoate. The enzyme catalyses 1,2,3-tri-(9Z)-hexadecenoylglycerol + 9-hydroxy-octadecanoate = 2,3-di-(9Z)-hexadecenoyl-sn-glycerol + 9-(9Z-hexadecenoyloxy)-octadecanoate. The catalysed reaction is 9-hydroxy-octadecanoate + 1,2-di-(9Z-octadecenoyl)-sn-glycerol = 9-(9Z-octadecenoyloxy)-octadecanoate + 2-(9Z-octadecenoyl)-glycerol. It carries out the reaction 1-hexadecanoyl-2,3-di-(9Z)-octadecenoyl-sn-glycerol + 9-hydroxy-octadecanoate = 1-hexadecanoyl-3-(9Z)-octadecenoyl-sn-glycerol + 9-(9Z-octadecenoyloxy)-octadecanoate. Its pathway is glycerolipid metabolism; triacylglycerol degradation. Its activity is regulated as follows. The triglyceride lipase activity is inhibited by BEL ((E)-6-(bromomethylene)-3-(1-naphthalenyl)-2H-tetrahydropyran-2-one), a suicide substrate inhibitor. No differences in the acylglycerol transacylase was detected in the presence or absence of ATP. Its function is as follows. Catalyzes the initial step in triglyceride hydrolysis in adipocyte and non-adipocyte lipid droplets. Exhibits a strong preference for the hydrolysis of long-chain fatty acid esters at the sn-2 position of the glycerol backbone and acts coordinately with LIPE/HLS and DGAT2 within the lipolytic cascade. Also possesses acylglycerol transacylase and phospholipase A2 activities. Transfers fatty acid from triglyceride to retinol, hydrolyzes retinylesters, and generates 1,3-diacylglycerol from triglycerides. Regulates adiposome size and may be involved in the degradation of adiposomes. Catalyzes the formation of an ester bond between hydroxy fatty acids and fatty acids derived from triglycerides or diglycerides to generate fatty acid esters of hydroxy fatty acids (FAHFAs) in adipocytes. Acts antagonistically with LDAH in regulation of cellular lipid stores. Inhibits LDAH-stimulated lipid droplet fusion. May play an important role in energy homeostasis. May play a role in the response of the organism to starvation, enhancing hydrolysis of triglycerides and providing free fatty acids to other tissues to be oxidized in situations of energy depletion. This is Patatin-like phospholipase domain-containing protein 2 from Homo sapiens (Human).